Here is a 59-residue protein sequence, read N- to C-terminus: Large ribosomal subunit protein uL30 (59 aa).

The protein belongs to the universal ribosomal protein uL30 family. In terms of assembly, part of the 50S ribosomal subunit.

In Macrococcus caseolyticus (strain JCSC5402) (Macrococcoides caseolyticum), this protein is Large ribosomal subunit protein uL30.